The sequence spans 352 residues: Homeobox protein Mohawk (352 aa).

The disordered stretch occupies residues 19–54 (GASERERGGRPYSGVLDSPHARPEVGIPDGPPLKDN). Positions 71–132 (VRHKRQALQD…NARRRLKNTV (62 aa)) form a DNA-binding region, homeobox; TALE-type. Disordered regions lie at residues 159–189 (VSSD…VHHP) and 245–301 (TRQR…PSKD).

Belongs to the TALE/IRO homeobox family.

The protein localises to the nucleus. May act as a morphogenetic regulator of cell adhesion. This chain is Homeobox protein Mohawk (MKX), found in Homo sapiens (Human).